We begin with the raw amino-acid sequence, 435 residues long: Plant UBX domain-containing protein 6 (435 aa).

Disordered regions lie at residues 1 to 150 (MDVN…PQKV), 208 to 265 (ENYT…EDQP), and 311 to 352 (PTTT…SMSS). Residues 49–62 (TSSFSTFDGSSGYS) show a composition bias toward low complexity. A compositionally biased stretch (basic and acidic residues) spans 112 to 129 (AVEHYGGEENRAIERPEQ). The segment covering 130-141 (SSRSMSEETVSS) has biased composition (low complexity). Residues 150–211 (VFTHTVTSWS…IISREEENYT (62 aa)) form the SEP 1 domain. The span at 211–222 (TESQAGSDSAST) shows a compositional bias: polar residues. The span at 231–242 (RAKESAIERSEQ) shows a compositional bias: basic and acidic residues. Acidic residues predominate over residues 252–265 (DSAELQEQQQEDQP). Residues 268-343 (VVTYTVTIWR…ESTSTEPPLT (76 aa)) enclose the SEP 2 domain. Low complexity-rich tracts occupy residues 312–323 (TTTRSTSCSSQT) and 333–349 (SESTSTEPPLTTTQPPS). Residues 357–434 (PAAPTTSIQL…GIANSVLVQK (78 aa)) form the UBX domain.

The sequence is that of Plant UBX domain-containing protein 6 from Arabidopsis thaliana (Mouse-ear cress).